Here is a 114-residue protein sequence, read N- to C-terminus: Large ribosomal subunit protein bL19 (114 aa).

It belongs to the bacterial ribosomal protein bL19 family.

In terms of biological role, this protein is located at the 30S-50S ribosomal subunit interface and may play a role in the structure and function of the aminoacyl-tRNA binding site. This is Large ribosomal subunit protein bL19 from Clostridium acetobutylicum (strain ATCC 824 / DSM 792 / JCM 1419 / IAM 19013 / LMG 5710 / NBRC 13948 / NRRL B-527 / VKM B-1787 / 2291 / W).